The sequence spans 692 residues: Methionine--tRNA ligase (692 aa).

A 'HIGH' region motif is present at residues proline 12–histidine 22. Zn(2+) contacts are provided by cysteine 143, cysteine 146, cysteine 156, and cysteine 159. Positions lysine 341–serine 345 match the 'KMSKS' region motif. Position 344 (lysine 344) interacts with ATP. A tRNA-binding domain is found at aspartate 586 to arginine 692.

Belongs to the class-I aminoacyl-tRNA synthetase family. MetG type 1 subfamily. Homodimer. It depends on Zn(2+) as a cofactor.

Its subcellular location is the cytoplasm. It carries out the reaction tRNA(Met) + L-methionine + ATP = L-methionyl-tRNA(Met) + AMP + diphosphate. In terms of biological role, is required not only for elongation of protein synthesis but also for the initiation of all mRNA translation through initiator tRNA(fMet) aminoacylation. The protein is Methionine--tRNA ligase of Bordetella pertussis (strain Tohama I / ATCC BAA-589 / NCTC 13251).